The following is a 250-amino-acid chain: 1-(5-phosphoribosyl)-5-[(5-phosphoribosylamino)methylideneamino] imidazole-4-carboxamide isomerase (250 aa).

The active-site Proton acceptor is the D8. D129 serves as the catalytic Proton donor.

Belongs to the HisA/HisF family.

Its subcellular location is the cytoplasm. The enzyme catalyses 1-(5-phospho-beta-D-ribosyl)-5-[(5-phospho-beta-D-ribosylamino)methylideneamino]imidazole-4-carboxamide = 5-[(5-phospho-1-deoxy-D-ribulos-1-ylimino)methylamino]-1-(5-phospho-beta-D-ribosyl)imidazole-4-carboxamide. It functions in the pathway amino-acid biosynthesis; L-histidine biosynthesis; L-histidine from 5-phospho-alpha-D-ribose 1-diphosphate: step 4/9. The sequence is that of 1-(5-phosphoribosyl)-5-[(5-phosphoribosylamino)methylideneamino] imidazole-4-carboxamide isomerase from Desulfatibacillum aliphaticivorans.